Consider the following 372-residue polypeptide: Queuine tRNA-ribosyltransferase (372 aa).

Asp89 acts as the Proton acceptor in catalysis. Residues 89–93 (DSGGF), Asp143, Gln185, and Gly212 each bind substrate. An RNA binding region spans residues 243 to 249 (GVGKPED). Asp262 acts as the Nucleophile in catalysis. Positions 267 to 271 (TRNAR) are RNA binding; important for wobble base 34 recognition. Residues Cys300, Cys302, Cys305, and His331 each contribute to the Zn(2+) site.

This sequence belongs to the queuine tRNA-ribosyltransferase family. As to quaternary structure, homodimer. Within each dimer, one monomer is responsible for RNA recognition and catalysis, while the other monomer binds to the replacement base PreQ1. Zn(2+) is required as a cofactor.

It carries out the reaction 7-aminomethyl-7-carbaguanine + guanosine(34) in tRNA = 7-aminomethyl-7-carbaguanosine(34) in tRNA + guanine. The protein operates within tRNA modification; tRNA-queuosine biosynthesis. Its function is as follows. Catalyzes the base-exchange of a guanine (G) residue with the queuine precursor 7-aminomethyl-7-deazaguanine (PreQ1) at position 34 (anticodon wobble position) in tRNAs with GU(N) anticodons (tRNA-Asp, -Asn, -His and -Tyr). Catalysis occurs through a double-displacement mechanism. The nucleophile active site attacks the C1' of nucleotide 34 to detach the guanine base from the RNA, forming a covalent enzyme-RNA intermediate. The proton acceptor active site deprotonates the incoming PreQ1, allowing a nucleophilic attack on the C1' of the ribose to form the product. After dissociation, two additional enzymatic reactions on the tRNA convert PreQ1 to queuine (Q), resulting in the hypermodified nucleoside queuosine (7-(((4,5-cis-dihydroxy-2-cyclopenten-1-yl)amino)methyl)-7-deazaguanosine). In Pseudomonas aeruginosa (strain LESB58), this protein is Queuine tRNA-ribosyltransferase.